The sequence spans 308 residues: D-alanine--D-alanine ligase (308 aa).

Residues 105–302 (KAIFRSLGLA…FPDLCERILD (198 aa)) enclose the ATP-grasp domain. 133-188 (DLPFGLPCVVKPAGEGSSVGVHLVNEAAELGPACRDAASHAGDVIVERYVKGTEVD) serves as a coordination point for ATP. Residues Asp256, Glu269, and Asn271 each contribute to the Mg(2+) site.

Belongs to the D-alanine--D-alanine ligase family. Requires Mg(2+) as cofactor. Mn(2+) serves as cofactor.

It is found in the cytoplasm. The enzyme catalyses 2 D-alanine + ATP = D-alanyl-D-alanine + ADP + phosphate + H(+). The protein operates within cell wall biogenesis; peptidoglycan biosynthesis. In terms of biological role, cell wall formation. The protein is D-alanine--D-alanine ligase of Anaeromyxobacter sp. (strain K).